Here is a 25-residue protein sequence, read N- to C-terminus: Soybean toxin 27 kDa chain (25 aa).

Heterodimer of a 27 kDa subunit and a 17 kDa subunit; disulfide-linked. SBTX is known to be glycosylated but it is not known which one of its two subunits is modified; contains 5% carbohydrates. Expressed in seeds, leaves, roots and stem (at protein level).

Functionally, involved in plant defense. Inhibits spore germination in C.sojina, A.niger (at concentrations &gt;50 ug/ml) and P.herguei but not in F.oxysporum and F.solani. Does not inhibit vegetative mycelial growth. Inhibits growth of C.albicans and K.marxiannus but not P.membranifaciens or C.parapsilosis. Probably acts by affecting the cell membrane. Does not have urease, chitinase, beta-1,3-glucanase or hemagglutination activities. Does not inhibit trypsin. Injection into mice produces toxic effects such as dyspnea, tonic-clonic convulsion and death. This is Soybean toxin 27 kDa chain from Glycine max (Soybean).